A 156-amino-acid chain; its full sequence is RNA polymerase sigma factor SigS (156 aa).

A Polymerase core binding motif is present at residues 29–44 (EYYQLLLIKMWQLSQI). The segment at residues 126–145 (QFEIAEIMSLSLSTIKLIKM) is a DNA-binding region (H-T-H motif).

It belongs to the sigma-70 factor family.

Its function is as follows. Sigma factors are initiation factors that promote the attachment of RNA polymerase to specific initiation sites and are then released. Sigma-S contributes to the protection against external stress, thus playing a role in cellular fitness and survival. This Staphylococcus aureus (strain Mu50 / ATCC 700699) protein is RNA polymerase sigma factor SigS (sigS).